The primary structure comprises 390 residues: Endothelial cell-selective adhesion molecule (390 aa).

An N-terminal signal peptide occupies residues Met-1–Ala-29. Positions Glu-30–Lys-143 constitute an Ig-like V-type domain. The Extracellular segment spans residues Glu-30–Ala-248. N-linked (GlcNAc...) asparagine glycans are attached at residues Asn-108, Asn-169, Asn-213, and Asn-236. The region spanning Pro-156–Ser-242 is the Ig-like C2-type domain. Cysteines 174 and 224 form a disulfide. A helical transmembrane segment spans residues Val-249–Leu-269. The Cytoplasmic portion of the chain corresponds to Leu-270–Val-390. The residue at position 301 (Ser-301) is a Phosphoserine. Positions Ala-316 to Val-365 are disordered. Phosphothreonine is present on residues Thr-332 and Thr-334. Residues Pro-333–Leu-342 show a composition bias toward polar residues. Residues Ser-336, Ser-339, Ser-344, and Ser-371 each carry the phosphoserine modification.

As to quaternary structure, interacts with MAGI1.

The protein resides in the cell junction. The protein localises to the adherens junction. Its subcellular location is the tight junction. It is found in the cell membrane. Its function is as follows. Can mediate aggregation most likely through a homophilic molecular interaction. This Macaca fascicularis (Crab-eating macaque) protein is Endothelial cell-selective adhesion molecule (ESAM).